The primary structure comprises 254 residues: Nickel import ATP-binding protein NikD (254 aa).

The ABC transporter domain maps to 2 to 241 (PQQIELRNIA…PKHTVTRSLV (240 aa)). Residue 36 to 43 (GGSGSGKS) coordinates ATP.

Belongs to the ABC transporter superfamily. Nickel importer (TC 3.A.1.5.3) family. As to quaternary structure, the complex is composed of two ATP-binding proteins (NikD and NikE), two transmembrane proteins (NikB and NikC) and a solute-binding protein (NikA).

The protein localises to the cell inner membrane. It catalyses the reaction Ni(2+)(out) + ATP + H2O = Ni(2+)(in) + ADP + phosphate + H(+). Functionally, part of the ABC transporter complex NikABCDE involved in nickel import. Responsible for energy coupling to the transport system. This chain is Nickel import ATP-binding protein NikD, found in Shigella flexneri serotype 5b (strain 8401).